The sequence spans 246 residues: uncharacterized protein (246 aa).

This is an uncharacterized protein from Borreliella burgdorferi (strain ATCC 35210 / DSM 4680 / CIP 102532 / B31) (Borrelia burgdorferi).